Consider the following 446-residue polypeptide: Probable carboxylesterase 16 (446 aa).

A disordered region spans residues 84–131; it reads PEPDSLRHKDNYNHQPRSDRRHSYGPNHNSPAPAERNESRRNSYGCNN. Residues 87 to 105 show a composition bias toward basic and acidic residues; the sequence is DSLRHKDNYNHQPRSDRRH. The Involved in the stabilization of the negatively charged intermediate by the formation of the oxyanion hole signature appears at 158-160; it reads HGG. Catalysis depends on residues Ser274, Asp378, and His408.

It belongs to the 'GDXG' lipolytic enzyme family. In terms of tissue distribution, expressed in roots, leaves, stems, flowers and siliques.

It carries out the reaction a carboxylic ester + H2O = an alcohol + a carboxylate + H(+). Functionally, carboxylesterase acting on esters with varying acyl chain length. The protein is Probable carboxylesterase 16 (CXE16) of Arabidopsis thaliana (Mouse-ear cress).